Reading from the N-terminus, the 968-residue chain is RNA polymerase-associated protein RapA (968 aa).

The region spanning 164-334 (EVGQRHAPRV…FARLRLLDPD (171 aa)) is the Helicase ATP-binding domain. Position 177–184 (177–184 (DEVGLGKT)) interacts with ATP. The short motif at 280-283 (DEAH) is the DEAH box element. The region spanning 490 to 644 (RVEWLLNYLV…TCPTGRTIYD (155 aa)) is the Helicase C-terminal domain.

Belongs to the SNF2/RAD54 helicase family. RapA subfamily. Interacts with the RNAP. Has a higher affinity for the core RNAP than for the holoenzyme. Its ATPase activity is stimulated by binding to RNAP.

Its function is as follows. Transcription regulator that activates transcription by stimulating RNA polymerase (RNAP) recycling in case of stress conditions such as supercoiled DNA or high salt concentrations. Probably acts by releasing the RNAP, when it is trapped or immobilized on tightly supercoiled DNA. Does not activate transcription on linear DNA. Probably not involved in DNA repair. In Yersinia pseudotuberculosis serotype O:1b (strain IP 31758), this protein is RNA polymerase-associated protein RapA.